A 126-amino-acid polypeptide reads, in one-letter code: Large ribosomal subunit protein bL12 (126 aa).

This sequence belongs to the bacterial ribosomal protein bL12 family. Homodimer. Part of the ribosomal stalk of the 50S ribosomal subunit. Forms a multimeric L10(L12)X complex, where L10 forms an elongated spine to which 2 to 4 L12 dimers bind in a sequential fashion. Binds GTP-bound translation factors.

Its function is as follows. Forms part of the ribosomal stalk which helps the ribosome interact with GTP-bound translation factors. Is thus essential for accurate translation. This chain is Large ribosomal subunit protein bL12, found in Acidovorax ebreus (strain TPSY) (Diaphorobacter sp. (strain TPSY)).